Consider the following 320-residue polypeptide: Lipoyl synthase (320 aa).

7 residues coordinate [4Fe-4S] cluster: Cys67, Cys72, Cys78, Cys93, Cys97, Cys100, and Ser307. The Radical SAM core domain maps to 79–296; it reads FNHGTATFMI…RDKAEKMGFE (218 aa).

The protein belongs to the radical SAM superfamily. Lipoyl synthase family. [4Fe-4S] cluster serves as cofactor.

The protein localises to the cytoplasm. It carries out the reaction [[Fe-S] cluster scaffold protein carrying a second [4Fe-4S](2+) cluster] + N(6)-octanoyl-L-lysyl-[protein] + 2 oxidized [2Fe-2S]-[ferredoxin] + 2 S-adenosyl-L-methionine + 4 H(+) = [[Fe-S] cluster scaffold protein] + N(6)-[(R)-dihydrolipoyl]-L-lysyl-[protein] + 4 Fe(3+) + 2 hydrogen sulfide + 2 5'-deoxyadenosine + 2 L-methionine + 2 reduced [2Fe-2S]-[ferredoxin]. The protein operates within protein modification; protein lipoylation via endogenous pathway; protein N(6)-(lipoyl)lysine from octanoyl-[acyl-carrier-protein]: step 2/2. Its function is as follows. Catalyzes the radical-mediated insertion of two sulfur atoms into the C-6 and C-8 positions of the octanoyl moiety bound to the lipoyl domains of lipoate-dependent enzymes, thereby converting the octanoylated domains into lipoylated derivatives. The protein is Lipoyl synthase of Histophilus somni (strain 129Pt) (Haemophilus somnus).